The primary structure comprises 362 residues: Malate dehydrogenase (362 aa).

It belongs to the LDH2/MDH2 oxidoreductase family. Homodimer.

It localises to the cytoplasm. It catalyses the reaction (S)-malate + NAD(+) = oxaloacetate + NADH + H(+). The chain is Malate dehydrogenase (mdh) from Pyrococcus abyssi (strain GE5 / Orsay).